A 376-amino-acid chain; its full sequence is UDP-N-acetylglucosamine--N-acetylmuramyl-(pentapeptide) pyrophosphoryl-undecaprenol N-acetylglucosamine transferase (376 aa).

Residues 11-13 (TGG), Asn-117, Arg-160, Ser-208, and Gln-310 contribute to the UDP-N-acetyl-alpha-D-glucosamine site.

It belongs to the glycosyltransferase 28 family. MurG subfamily.

It localises to the cell inner membrane. The enzyme catalyses di-trans,octa-cis-undecaprenyl diphospho-N-acetyl-alpha-D-muramoyl-L-alanyl-D-glutamyl-meso-2,6-diaminopimeloyl-D-alanyl-D-alanine + UDP-N-acetyl-alpha-D-glucosamine = di-trans,octa-cis-undecaprenyl diphospho-[N-acetyl-alpha-D-glucosaminyl-(1-&gt;4)]-N-acetyl-alpha-D-muramoyl-L-alanyl-D-glutamyl-meso-2,6-diaminopimeloyl-D-alanyl-D-alanine + UDP + H(+). It functions in the pathway cell wall biogenesis; peptidoglycan biosynthesis. In terms of biological role, cell wall formation. Catalyzes the transfer of a GlcNAc subunit on undecaprenyl-pyrophosphoryl-MurNAc-pentapeptide (lipid intermediate I) to form undecaprenyl-pyrophosphoryl-MurNAc-(pentapeptide)GlcNAc (lipid intermediate II). The sequence is that of UDP-N-acetylglucosamine--N-acetylmuramyl-(pentapeptide) pyrophosphoryl-undecaprenol N-acetylglucosamine transferase from Rickettsia peacockii (strain Rustic).